The following is a 594-amino-acid chain: Developmental and secondary metabolism regulator veA (594 aa).

Residues 24–220 form the Velvet domain; that stretch reads GRRLFYRIDV…AEQGTRVRIR (197 aa). The Nuclear localization signal motif lies at 38–43; it reads EKCRAC. Disordered regions lie at residues 40-59 and 210-558; these read CRACGSGPKSSTDRRPVDPP and MAEQ…DVEE. Basic residues predominate over residues 217–229; it reads VRIRRDVRMRRRD. Pro residues predominate over residues 296-307; it reads APPPPNPPPPGF. Low complexity predominate over residues 327–351; sequence SHSQYQQPTSSSSSSEQVSSVPQSP. A compositionally biased stretch (polar residues) spans 352–362; sequence AYSSHAAQQHY. The span at 374-383 shows a compositional bias: basic and acidic residues; that stretch reads PERRLSDHRS. Over residues 384 to 403 the composition is skewed to low complexity; the sequence is SQPNNHPQQSPHQHSYSHRS. Residues 405–416 show a composition bias toward basic and acidic residues; that stretch reads PQRERFMPDSRR. Positions 457-506 are PEST; that stretch reads VADTQATPHLPPIRWPRPNMNLPSPPSEHQEALQPLQPAPLHYESQTHQQ. Low complexity predominate over residues 523–538; sequence YSYGYSYSHNHSHGYG.

The protein belongs to the velvet family. VeA subfamily. In terms of assembly, component of the heterotrimeric velvet complex composed of LAEA, VEA and VELB; VEA acting as a bridging protein between LAEA and VELB.

It localises to the nucleus. The protein localises to the cytoplasm. Component of the velvet transcription factor complex that controls sexual/asexual developmental ratio in response to light, promoting sexual development in the darkness while stimulating asexual sporulation under illumination. The velvet complex acts as a global regulator for secondary metabolite gene expression. Regulates of the response to reactive oxygen species (ROS) stress. The protein is Developmental and secondary metabolism regulator veA of Pyricularia oryzae (strain 70-15 / ATCC MYA-4617 / FGSC 8958) (Rice blast fungus).